Consider the following 98-residue polypeptide: Guanine nucleotide-binding protein subunit gamma 1 (98 aa).

In terms of domain architecture, G protein gamma spans 19 to 98; the sequence is GKHRILAELA…GGEGCRCLIL (80 aa). Residues 20 to 50 adopt a coiled-coil conformation; sequence KHRILAELARVEQEVAFLEKELKEVENTDIV. Positions 88-94 are regulates lipidation and cell membrane subcellular localization; sequence NGGEGCR. Cys-93 carries the S-palmitoyl cysteine lipid modification. Cys-95 is modified (cysteine methyl ester). A lipid anchor (S-farnesyl cysteine) is attached at Cys-95. Positions 96–98 are cleaved as a propeptide — removed in mature form; sequence LIL.

G proteins are composed of 3 units, alpha, beta and gamma. Interacts with the beta subunit GB1. The dimer GB1-GG1 interacts with NDL1, NDL2 and NDL3. Binds to NUDT7. Mostly expressed in seedlings (especially at the hypocotyl/root junction), young cauline leaves, open flowers, and floral stems, and, to a lower extent, in roots (restricted to the stele), rosette leaves (restricted to veins), siliques, and unopened floral buds. Also present in hydathods.

The protein resides in the cell membrane. It is found in the golgi apparatus membrane. The protein localises to the golgi apparatus. It localises to the trans-Golgi network membrane. Its subcellular location is the cytoplasm. Guanine nucleotide-binding proteins (G proteins) are involved as a modulator or transducer in various transmembrane signaling systems. The beta and gamma chains are required for the GTPase activity, for replacement of GDP by GTP, and for G protein-effector interaction. Involved in the abscisic acid (ABA) and ethylene signaling pathways. Regulates acropetal transport of auxin (IAA) in roots and hypocotyls, and thus modulates root architecture (e.g. lateral root formation). The heterotrimeric G-protein controls defense responses to necrotrophic and vascular fungi probably by modulating cell wall-related genes expression; involved in resistance to fungal pathogens such as Alternaria brassicicola, Plectosphaerella cucumerina and Fusarium oxysporum. The polypeptide is Guanine nucleotide-binding protein subunit gamma 1 (GG1) (Arabidopsis thaliana (Mouse-ear cress)).